Reading from the N-terminus, the 272-residue chain is Undecaprenyl-diphosphatase (272 aa).

8 helical membrane passes run 6–26 (SLLV…LPVS), 45–65 (AKTF…VMFW), 89–109 (LSLI…LVFH), 115–135 (LFNP…LIIA), 156–176 (AFFI…RSGA), 189–209 (YAAS…ATAL), 221–241 (ADLP…LVAI), and 251–271 (ISFI…FAVF).

Belongs to the UppP family.

The protein localises to the cell inner membrane. It carries out the reaction di-trans,octa-cis-undecaprenyl diphosphate + H2O = di-trans,octa-cis-undecaprenyl phosphate + phosphate + H(+). Functionally, catalyzes the dephosphorylation of undecaprenyl diphosphate (UPP). Confers resistance to bacitracin. This chain is Undecaprenyl-diphosphatase, found in Cronobacter sakazakii (strain ATCC BAA-894) (Enterobacter sakazakii).